The following is a 666-amino-acid chain: Calpain-10 (666 aa).

The Calpain catalytic domain occupies 13 to 321 (LFRDAAFPAS…FDEVTIGYPV (309 aa)). Residues C73, H238, and N263 contribute to the active site. 2 domain III regions span residues 322 to 488 (TEAG…ISLS) and 507 to 648 (EWET…IHSQ).

This sequence belongs to the peptidase C2 family. In terms of tissue distribution, ubiquitous.

The protein resides in the cytoplasm. Its subcellular location is the nucleus. Its function is as follows. Calcium-regulated non-lysosomal thiol-protease which catalyzes limited proteolysis of substrates involved in cytoskeletal remodeling and signal transduction. May play a role in insulin-stimulated glucose uptake. This chain is Calpain-10 (Capn10), found in Rattus norvegicus (Rat).